The primary structure comprises 881 residues: Probable alpha/beta-glucosidase agdC (881 aa).

The N-terminal stretch at 1–14 is a signal peptide; it reads MLRSLLLLAPLVGA. Asparagine 171, asparagine 293, and asparagine 373 each carry an N-linked (GlcNAc...) asparagine glycan. Aspartate 422 acts as the Nucleophile in catalysis. Glutamate 425 is a catalytic residue. The segment at 440–485 is disordered; it reads YSRDNDLPPAAPPVRPSNPRPLPGFPGDFQPSSSSKRSTKGSKVGL. Residues 448–463 show a composition bias toward pro residues; sequence PAAPPVRPSNPRPLPG. N-linked (GlcNAc...) asparagine glycosylation occurs at asparagine 506. Aspartate 571 (proton donor) is an active-site residue. N-linked (GlcNAc...) asparagine glycans are attached at residues asparagine 572, asparagine 608, and asparagine 742.

This sequence belongs to the glycosyl hydrolase 31 family.

The protein resides in the secreted. The enzyme catalyses Hydrolysis of terminal, non-reducing (1-&gt;4)-linked alpha-D-glucose residues with release of alpha-D-glucose.. It carries out the reaction Hydrolysis of terminal, non-reducing beta-D-glucosyl residues with release of beta-D-glucose.. Its function is as follows. Glucosidase involved in the degradation of cellulosic biomass. Has both alpha- and beta-glucosidase activity. In Neosartorya fischeri (strain ATCC 1020 / DSM 3700 / CBS 544.65 / FGSC A1164 / JCM 1740 / NRRL 181 / WB 181) (Aspergillus fischerianus), this protein is Probable alpha/beta-glucosidase agdC (agdC).